We begin with the raw amino-acid sequence, 374 residues long: Alcohol dehydrogenase class-3 (374 aa).

A2 is subject to N-acetylalanine. Positions 45, 67, 97, 100, 103, 111, and 174 each coordinate Zn(2+). K233 carries the N6-succinyllysine modification. S247 bears the Phosphoserine mark. K315 is subject to N6-succinyllysine. A phosphoserine mark is found at S324 and S351.

This sequence belongs to the zinc-containing alcohol dehydrogenase family. Class-III subfamily. As to quaternary structure, homodimer. Zn(2+) serves as cofactor. Ubiquitous.

The protein localises to the cytoplasm. The catalysed reaction is a primary alcohol + NAD(+) = an aldehyde + NADH + H(+). The enzyme catalyses a secondary alcohol + NAD(+) = a ketone + NADH + H(+). It catalyses the reaction S-(hydroxymethyl)glutathione + NADP(+) = S-formylglutathione + NADPH + H(+). It carries out the reaction S-(hydroxymethyl)glutathione + NAD(+) = S-formylglutathione + NADH + H(+). The catalysed reaction is 20-oxo-(5Z,8Z,11Z,14Z)-eicosatetraenoate + NAD(+) + H2O = (5Z,8Z,11Z,14Z)-eicosatetraenedioate + NADH + 2 H(+). The enzyme catalyses 20-hydroxy-(5Z,8Z,11Z,14Z)-eicosatetraenoate + NAD(+) = 20-oxo-(5Z,8Z,11Z,14Z)-eicosatetraenoate + NADH + H(+). It catalyses the reaction S-nitrosoglutathione + NADH + H(+) = S-(hydroxysulfenamide)glutathione + NAD(+). In terms of biological role, catalyzes the oxidation of long-chain primary alcohols and the oxidation of S-(hydroxymethyl) glutathione. Also oxidizes long chain omega-hydroxy fatty acids, such as 20-HETE, producing both the intermediate aldehyde, 20-oxoarachidonate and the end product, a dicarboxylic acid, (5Z,8Z,11Z,14Z)-eicosatetraenedioate. Class-III ADH is remarkably ineffective in oxidizing ethanol. Required for clearance of cellular formaldehyde, a cytotoxic and carcinogenic metabolite that induces DNA damage. Also acts as a S-nitroso-glutathione reductase by catalyzing the NADH-dependent reduction of S-nitrosoglutathione, thereby regulating protein S-nitrosylation. The chain is Alcohol dehydrogenase class-3 from Mus musculus (Mouse).